Consider the following 741-residue polypeptide: Ion-translocating oxidoreductase complex subunit C (741 aa).

4Fe-4S ferredoxin-type domains are found at residues 369 to 397 and 407 to 436; these read GEPQ…QQLY and KATT…VQYF. Residues C377, C380, C383, C387, C416, C419, C422, and C426 each contribute to the [4Fe-4S] cluster site. A disordered region spans residues 627-654; it reads IARAKARKLEQQQQANAEPEEQVDPRKA.

It belongs to the 4Fe4S bacterial-type ferredoxin family. RnfC subfamily. The complex is composed of six subunits: RsxA, RsxB, RsxC, RsxD, RsxE and RsxG. The cofactor is [4Fe-4S] cluster.

The protein resides in the cell inner membrane. In terms of biological role, part of a membrane-bound complex that couples electron transfer with translocation of ions across the membrane. Required to maintain the reduced state of SoxR. The protein is Ion-translocating oxidoreductase complex subunit C of Escherichia coli O127:H6 (strain E2348/69 / EPEC).